Consider the following 86-residue polypeptide: Omega-theraphotoxin-Hhn1b (86 aa).

The first 21 residues, methionine 1–alanine 21, serve as a signal peptide directing secretion. Positions serine 22 to arginine 50 are excised as a propeptide. Cystine bridges form between cysteine 52-cysteine 66, cysteine 59-cysteine 71, and cysteine 65-cysteine 78.

Belongs to the neurotoxin 10 (Hwtx-1) family. 17 (Hntx-9) subfamily. In terms of tissue distribution, expressed by the venom gland.

The protein localises to the secreted. Ion channel inhibitor. In Cyriopagopus hainanus (Chinese bird spider), this protein is Omega-theraphotoxin-Hhn1b.